We begin with the raw amino-acid sequence, 707 residues long: Protein kinase C theta type (707 aa).

A C2 domain is found at 1–107; it reads MSPFLRIGLS…KNNGRTEIWL (107 aa). Tyr-90 is modified (phosphotyrosine; by LCK). A Phorbol-ester/DAG-type 1 zinc finger spans residues 159–209; the sequence is CHEFTATFFPQPTFCSVCHEFVWGLNKQGYQCRQCNAAIHKKCIDKVIAKC. At Thr-219 the chain carries Phosphothreonine; by autocatalysis. The Phorbol-ester/DAG-type 2 zinc finger occupies 231–281; sequence PHRFKVYNYKSPTFCEHCGTLLWGLARQGLKCDACGMNVHHRCQTKVANLC. The segment at 327–365 is disordered; sequence ETRPPCVPTPGKREPQGISWDSPLDGSNKSAGPPEPEVS. Ser-348 carries the phosphoserine modification. The Protein kinase domain occupies 380 to 634; it reads FILHKMLGKG…RGDIRQHPLF (255 aa). Residues 386–394 and Lys-409 contribute to the ATP site; that span reads LGKGSFGKV. Asp-504 (proton acceptor) is an active-site residue. Thr-538 carries the post-translational modification Phosphothreonine; by PDPK1. One can recognise an AGC-kinase C-terminal domain in the interval 635-706; it reads REINWEELER…INPGMETLIC (72 aa). A Phosphoserine; by autocatalysis modification is found at Ser-676. Phosphoserine is present on Ser-685. Position 695 is a phosphoserine; by autocatalysis (Ser-695).

It belongs to the protein kinase superfamily. AGC Ser/Thr protein kinase family. PKC subfamily. Part of a membrane raft complex composed at least of BCL10, CARD11, MALT1 and IKBKB. Interacts with GLRX3 (via N-terminus). Interacts with ECT2. Interacts with CCDC88A/GIV; the interaction leads to phosphorylation of CCDC88A and inhibition of its guanine nucleotide exchange factor activity. Interacts with CD28. Requires Mg(2+) as cofactor. Post-translationally, autophosphorylation at Thr-219 is required for targeting to the TCR and cellular function of PRKCQ upon antigen receptor ligation. Following TCR stimulation, phosphorylated at Tyr-90 and Ser-685. In terms of tissue distribution, T-lymphocytes and skeletal muscle.

The protein resides in the cytoplasm. It is found in the cell membrane. It carries out the reaction L-seryl-[protein] + ATP = O-phospho-L-seryl-[protein] + ADP + H(+). The enzyme catalyses L-threonyl-[protein] + ATP = O-phospho-L-threonyl-[protein] + ADP + H(+). Novel PKCs (PRKCD, PRKCE, PRKCH and PRKCQ) are calcium-insensitive, but activated by diacylglycerol (DAG) and phosphatidylserine. Three specific sites; Thr-538 (activation loop of the kinase domain), Ser-676 (turn motif) and Ser-695 (hydrophobic region), need to be phosphorylated for its full activation. Calcium-independent, phospholipid- and diacylglycerol (DAG)-dependent serine/threonine-protein kinase that mediates non-redundant functions in T-cell receptor (TCR) signaling, including T-cells activation, proliferation, differentiation and survival, by mediating activation of multiple transcription factors such as NF-kappa-B, JUN, NFATC1 and NFATC2. In TCR-CD3/CD28-co-stimulated T-cells, is required for the activation of NF-kappa-B and JUN, which in turn are essential for IL2 production, and participates in the calcium-dependent NFATC1 and NFATC2 transactivation. Mediates the activation of the canonical NF-kappa-B pathway (NFKB1) by direct phosphorylation of CARD11 on several serine residues, inducing CARD11 association with lipid rafts and recruitment of the BCL10-MALT1 complex, which then activates IKK complex, resulting in nuclear translocation and activation of NFKB1. May also play an indirect role in activation of the non-canonical NF-kappa-B (NFKB2) pathway. In the signaling pathway leading to JUN activation, acts by phosphorylating the mediator STK39/SPAK and may not act through MAP kinases signaling. Plays a critical role in TCR/CD28-induced NFATC1 and NFATC2 transactivation by participating in the regulation of reduced inositol 1,4,5-trisphosphate generation and intracellular calcium mobilization. After costimulation of T-cells through CD28 can phosphorylate CBLB and is required for the ubiquitination and subsequent degradation of CBLB, which is a prerequisite for the activation of TCR. During T-cells differentiation, plays an important role in the development of T-helper 2 (Th2) cells following immune and inflammatory responses, and, in the development of inflammatory autoimmune diseases, is necessary for the activation of IL17-producing Th17 cells. May play a minor role in Th1 response. Upon TCR stimulation, mediates T-cell protective survival signal by phosphorylating BAD, thus protecting T-cells from BAD-induced apoptosis, and by up-regulating BCL-X(L)/BCL2L1 levels through NF-kappa-B and JUN pathways. In platelets, regulates signal transduction downstream of the ITGA2B, CD36/GP4, F2R/PAR1 and F2RL3/PAR4 receptors, playing a positive role in 'outside-in' signaling and granule secretion signal transduction. May relay signals from the activated ITGA2B receptor by regulating the uncoupling of WASP and WIPF1, thereby permitting the regulation of actin filament nucleation and branching activity of the Arp2/3 complex. May mediate inhibitory effects of free fatty acids on insulin signaling by phosphorylating IRS1, which in turn blocks IRS1 tyrosine phosphorylation and downstream activation of the PI3K/AKT pathway. Phosphorylates MSN (moesin) in the presence of phosphatidylglycerol or phosphatidylinositol. Phosphorylates PDPK1 at 'Ser-504' and 'Ser-532' and negatively regulates its ability to phosphorylate PKB/AKT1. Phosphorylates CCDC88A/GIV and inhibits its guanine nucleotide exchange factor activity. Phosphorylates and activates LRRK1, which phosphorylates RAB proteins involved in intracellular trafficking. In Mus musculus (Mouse), this protein is Protein kinase C theta type (Prkcq).